A 350-amino-acid polypeptide reads, in one-letter code: MNPPTTSDSAQTQSRKADHIRICLEEDVQFRDTTNGLERYRFTHSCLPEIDRNDIDLSATFLGKKLNAPLLISSMTGGTEEAGIINQRLAGLAQHYKLAMGVGSQRVAVEKPQVADTFAIRKYAPDVLLFANVGAVQLNYKYGLDECLRIIDMLEADALILHINPLQECIQPRGDVNFRGLLDKINQLCSKLPVPAIAKEVGNGISGAMAEKLIAAGVQAIDVAGAGGTSWAKVEGERAENAMQRRLGRTFADWGMPTAECITSVRAIAPHIPLIASGGLRDGLDVAKAIALGADIAGLAMPFLQAAVESEAALQDLTEVLIAEITTVLFCTGNANLDQLKHSGSLQRLQ.

Residue 15–16 (RK) participates in substrate binding. Residues Ser73, 74–76 (SMT), Ser104, and Asn132 each bind FMN. Position 104 to 106 (104 to 106 (SQR)) interacts with substrate. Gln167 serves as a coordination point for substrate. Glu168 provides a ligand contact to Mg(2+). FMN contacts are provided by residues Lys199, Thr229, 279–281 (GLR), and 300–301 (AM).

The protein belongs to the IPP isomerase type 2 family. Homooctamer. Dimer of tetramers. Requires FMN as cofactor. The cofactor is NADPH. Mg(2+) is required as a cofactor.

It localises to the cytoplasm. The catalysed reaction is isopentenyl diphosphate = dimethylallyl diphosphate. Functionally, involved in the biosynthesis of isoprenoids. Catalyzes the 1,3-allylic rearrangement of the homoallylic substrate isopentenyl (IPP) to its allylic isomer, dimethylallyl diphosphate (DMAPP). This chain is Isopentenyl-diphosphate delta-isomerase, found in Nostoc sp. (strain PCC 7120 / SAG 25.82 / UTEX 2576).